Reading from the N-terminus, the 256-residue chain is Ribonuclease 3 (256 aa).

The RNase III domain maps to 3-125 (LEALQQRLGY…IFGAVFLDGG (123 aa)). Residue Glu38 coordinates Mg(2+). The active site involves Asp42. Positions 111 and 114 each coordinate Mg(2+). Residue Glu114 is part of the active site. Positions 152-222 (DAKTLLQEYL…AKLALEEAHR (71 aa)) constitute a DRBM domain. The interval 227 to 256 (LVKRSRAERTGKTRKQATPPDPQLSLRLKE) is disordered.

It belongs to the ribonuclease III family. In terms of assembly, homodimer. The cofactor is Mg(2+).

The protein localises to the cytoplasm. The catalysed reaction is Endonucleolytic cleavage to 5'-phosphomonoester.. Its function is as follows. Digests double-stranded RNA. Involved in the processing of primary rRNA transcript to yield the immediate precursors to the large and small rRNAs (23S and 16S). Processes some mRNAs, and tRNAs when they are encoded in the rRNA operon. Processes pre-crRNA and tracrRNA of type II CRISPR loci if present in the organism. The chain is Ribonuclease 3 from Ralstonia nicotianae (strain ATCC BAA-1114 / GMI1000) (Ralstonia solanacearum).